A 453-amino-acid polypeptide reads, in one-letter code: Ribosome biogenesis protein SSF2 (453 aa).

A compositionally biased stretch (basic residues) spans 1 to 11; sequence MAKRRQKKRTH. Disordered stretches follow at residues 1-22, 275-327, and 373-453; these read MAKR…ERDI, KAKH…KAIK, and AKMR…SEVE. A Brix domain is found at 26–348; it reads MVIRVGQTSL…LVKIEDGICS (323 aa). Residues 373-398 are compositionally biased toward basic and acidic residues; it reads AKMRLKEQRRKEQEENIAKKKAVKDA. Positions 399 to 409 are enriched in basic residues; it reads KKQRKLERRKA. Residues 440 to 453 show a composition bias toward acidic residues; the sequence is VPEDLDSDLFSEVE.

Part of a complex that includes BRX1, RPF1, RPF2 and SSF1 or SSF2.

The protein resides in the nucleus. The protein localises to the nucleolus. Functionally, required for biogenesis of the 60S ribosomal subunit. The protein is Ribosome biogenesis protein SSF2 (SSF2) of Saccharomyces cerevisiae (strain ATCC 204508 / S288c) (Baker's yeast).